Reading from the N-terminus, the 63-residue chain is Prokaryotic ubiquitin-like protein UBact (63 aa).

The tract at residues 1-63 (MSGRSTFGRF…SRRYRQRTGE (63 aa)) is disordered. Residues 17 to 50 (PWERKPGDDEGGPKRPKVERPDTNDLLKRMRRVD) show a composition bias toward basic and acidic residues. Residue Glu63 forms an Isoglutamyl lysine isopeptide (Glu-Lys) (interchain with K-? in acceptor proteins) linkage.

Belongs to the ubiquitin-like protein UBact family.

In terms of biological role, may function as a protein modifier covalently attached to lysine residues of substrate proteins. This may serve to target the modified proteins for degradation by proteasomes. The polypeptide is Prokaryotic ubiquitin-like protein UBact (Handelsmanbacteria sp. (strain RIFCSPLOWO2_12_FULL_64_10)).